Here is a 392-residue protein sequence, read N- to C-terminus: Frizzled-9 (392 aa).

The Extracellular portion of the chain corresponds to 1-35 (ACDNPEKFQYVEKSLSCAPRCSPGVDVYWSREDKD). The helical transmembrane segment at 36-56 (FAFVWMAVWSTLCFVSTAFTV) threads the bilayer. The Cytoplasmic segment spans residues 57–72 (LTFLLDPHRFQYPERP). The helical transmembrane segment at 73-93 (IIFLSMCYNVYSVAFIIRSVA) threads the bilayer. Residues 94 to 119 (GAETIACDRENGELYIIQEGLESTGC) are Extracellular-facing. The helical transmembrane segment at 120 to 140 (TIVFLILYYFGMASSLWWVVL) threads the bilayer. Residues 141-161 (TLTWFLAAGKKWGHEAIEAHS) lie on the Cytoplasmic side of the membrane. Residues 162 to 182 (SYFHMAAWGIPAMKTIVILTM) form a helical membrane-spanning segment. Over 183-206 (RKVAGDELTGLCYVGSMDVSALTG) the chain is Extracellular. The helical transmembrane segment at 207–227 (FVLIPLSCYLVVGTSFILTGF) threads the bilayer. Over 228 to 253 (VALFHIRKIMKTGGTNTEKLEKLMVK) the chain is Cytoplasmic. A helical transmembrane segment spans residues 254-274 (IGVFSILYTVPATCVIVCYFY). Topologically, residues 275-312 (ERLNVDYWNLRALERACVPLPGRRAADCSLEASVPTVA) are extracellular. The chain crosses the membrane as a helical span at residues 313–333 (VFMLKIFMSLVVGITSGVWVW). The Cytoplasmic segment spans residues 334 to 392 (SSKTLQTWQSLCNRKLGVRTRGKPCSGVSCGGVHCHYKAPTVMLHMTKTDPYLDNPTHV). A Lys-Thr-X-X-X-Trp motif, mediates interaction with the PDZ domain of Dvl family members motif is present at residues 336–341 (KTLQTW). The PDZ-binding signature appears at 390–392 (THV).

It belongs to the G-protein coupled receptor Fz/Smo family.

Its subcellular location is the cell membrane. Functionally, receptor for WNT2 that is coupled to the beta-catenin canonical signaling pathway, which leads to the activation of disheveled proteins, inhibition of GSK-3 kinase, nuclear accumulation of beta-catenin and activation of Wnt target genes. This chain is Frizzled-9 (FZD9), found in Gallus gallus (Chicken).